A 231-amino-acid polypeptide reads, in one-letter code: Ribonuclease 3 (231 aa).

The RNase III domain maps to 5–134; it reads QEKLKNDYGL…FLGALFIDQG (130 aa). Glu47 contacts Mg(2+). The active site involves Asp51. Mg(2+) contacts are provided by Asn120 and Glu123. Glu123 is an active-site residue. The 70-residue stretch at 160-229 folds into the DRBM domain; sequence DYKTELQEVL…AENAIKGQNH (70 aa).

It belongs to the ribonuclease III family. Homodimer. Mg(2+) is required as a cofactor.

Its subcellular location is the cytoplasm. The catalysed reaction is Endonucleolytic cleavage to 5'-phosphomonoester.. Functionally, digests double-stranded RNA. Involved in the processing of primary rRNA transcript to yield the immediate precursors to the large and small rRNAs (23S and 16S). Processes some mRNAs, and tRNAs when they are encoded in the rRNA operon. Processes pre-crRNA and tracrRNA of type II CRISPR loci if present in the organism. The polypeptide is Ribonuclease 3 (Lactococcus lactis subsp. cremoris (strain SK11)).